A 372-amino-acid chain; its full sequence is DNA-directed RNA polymerase subunit alpha (372 aa).

The interval 1–268 (MIFDEDSNSV…DQFQPFINFD (268 aa)) is alpha N-terminal domain (alpha-NTD). The tract at residues 280–372 (KDALPYDSNL…ESLSKQYSEE (93 aa)) is alpha C-terminal domain (alpha-CTD).

Belongs to the RNA polymerase alpha chain family. As to quaternary structure, homodimer. The RNAP catalytic core consists of 2 alpha, 1 beta, 1 beta' and 1 omega subunit. When a sigma factor is associated with the core the holoenzyme is formed, which can initiate transcription.

It carries out the reaction RNA(n) + a ribonucleoside 5'-triphosphate = RNA(n+1) + diphosphate. Functionally, DNA-dependent RNA polymerase catalyzes the transcription of DNA into RNA using the four ribonucleoside triphosphates as substrates. The sequence is that of DNA-directed RNA polymerase subunit alpha from Ehrlichia canis (strain Jake).